Reading from the N-terminus, the 107-residue chain is Glutaconyl-CoA decarboxylase subunit delta (107 aa).

Residues 10–32 traverse the membrane as a helical segment; the sequence is MINMTIVFGVLIVLGILMVLIHA. The segment at 37 to 60 is disordered; sequence KKVQGKKKPVVAKPAPSAAASKRQ. A compositionally biased stretch (low complexity) spans 47–57; that stretch reads VAKPAPSAAAS.

Belongs to the OadG family. As to quaternary structure, heterooctamer consisting of two alpha, two beta, two gamma and two delta subunits.

It localises to the cell membrane. It catalyses the reaction (2E)-glutaconyl-CoA + Na(+)(in) + H(+) = (2E)-butenoyl-CoA + Na(+)(out) + CO2. Its pathway is amino-acid degradation; L-glutamate degradation via hydroxyglutarate pathway; crotonoyl-CoA from L-glutamate: step 5/5. Functionally, part of the primary sodium pump glutaconyl-CoA decarboxylase (GCD). Possible membrane anchor for the alpha subunit. This is Glutaconyl-CoA decarboxylase subunit delta (gcdD) from Acidaminococcus fermentans (strain ATCC 25085 / DSM 20731 / CCUG 9996 / CIP 106432 / VR4).